A 61-amino-acid polypeptide reads, in one-letter code: uncharacterized protein (61 aa).

2 helical membrane passes run 4-24 (IIAFIWTFLLSHMACYLVASM) and 34-54 (SSVIAVVLYVLIMVLAEIMPM).

Its subcellular location is the cell membrane. This is an uncharacterized protein from Bacillus subtilis (strain 168).